The sequence spans 412 residues: MERIPSAQPPPACLPKAPGLEHGDLPGMYPAHMYQVYKSRRGIKRSEDSKETYKLPHRLIEKKRRDRINECIAQLKDLLPEHLKLTTLGHLEKAVVLELTLKHVKALTNLIDQQQQKIIALQSGLQAGELSGRNVETGQEMFCSGFQTCAREVLQYLAKHENTRDLKSSQLVTHLHRVVSELLQGGTSRKPSDPAPKVMDFKEKPSSPAKGSEGPGKNCVPVIQRTFAHSSGEQSGSDTDTDSGYGGESEKGDLRSEQPCFKSDHGRRFTMGERIGAIKQESEEPPTKKNRMQLSDDEGHFTSSDLISSPFLGPHPHQPPFCLPFYLIPPSATAYLPMLEKCWYPTSVPVLYPGLNASAAALSSFMNPDKISAPLLMPQRLPSPLPAHPSVDSSVLLQALKPIPPLNLETKD.

The interval methionine 1–glutamine 139 is essential for interaction with BMAL1, E-box binding and repressor activity against the CLOCK-BMAL1 heterodimer. In terms of domain architecture, bHLH spans threonine 52–leucine 107. Residues leucine 75–leucine 79 are necessary for interaction with RXRA and repressor activity against RXRA. Residues phenylalanine 142 to leucine 175 form the Orange domain. Lysine 159 participates in a covalent cross-link: Glycyl lysine isopeptide (Lys-Gly) (interchain with G-Cter in SUMO1, SUMO2 and SUMO3). Lysine 167 participates in a covalent cross-link: Glycyl lysine isopeptide (Lys-Gly) (interchain with G-Cter in SUMO2). The disordered stretch occupies residues leucine 182 to serine 303. Residue serine 235 is modified to Phosphoserine. Residues glutamate 248–methionine 271 show a composition bias toward basic and acidic residues. A Glycyl lysine isopeptide (Lys-Gly) (interchain with G-Cter in SUMO1); alternate cross-link involves residue lysine 279. Lysine 279 participates in a covalent cross-link: Glycyl lysine isopeptide (Lys-Gly) (interchain with G-Cter in SUMO1, SUMO2 and SUMO3); alternate. Lysine 279 is covalently cross-linked (Glycyl lysine isopeptide (Lys-Gly) (interchain with G-Cter in SUMO2); alternate). Residue lysine 288 forms a Glycyl lysine isopeptide (Lys-Gly) (interchain with G-Cter in SUMO2) linkage. Serine 383 is subject to Phosphoserine.

In terms of assembly, homodimer. Heterodimer with BHLHE41/DEC2. Interacts with TCF3/E47. Interacts with ubiquitin-conjugating enzyme UBE2I/UBC9. Interacts with HDAC1, SUMO1, RXRA and BMAL1. Ubiquitinated; which may lead to proteasomal degradation. In terms of processing, sumoylation inhibits its ubiquitination and promotes its negative regulation of the CLOCK-BMAL1 heterodimer transcriptional activator activity. As to expression, expressed in cartilage, spleen, intestine, lung, and to a lesser extent in heart, brain, liver, muscle and stomach.

It localises to the cytoplasm. The protein localises to the nucleus. Its function is as follows. Transcriptional repressor involved in the regulation of the circadian rhythm by negatively regulating the activity of the clock genes and clock-controlled genes. Acts as the negative limb of a novel autoregulatory feedback loop (DEC loop) which differs from the one formed by the PER and CRY transcriptional repressors (PER/CRY loop). Both these loops are interlocked as it represses the expression of PER1/2 and in turn is repressed by PER1/2 and CRY1/2. Represses the activity of the circadian transcriptional activator: CLOCK-BMAL1|BMAL2 heterodimer by competing for the binding to E-box elements (5'-CACGTG-3') found within the promoters of its target genes. Negatively regulates its own expression and the expression of DBP and BHLHE41/DEC2. Acts as a corepressor of RXR and the RXR-LXR heterodimers and represses the ligand-induced RXRA and NR1H3/LXRA transactivation activity. May be involved in the regulation of chondrocyte differentiation via the cAMP pathway. Represses the transcription of NR0B2 and attentuates the transactivation of NR0B2 by the CLOCK-BMAL1 complex. Drives the circadian rhythm of blood pressure through transcriptional repression of ATP1B1 in the cardiovascular system. This chain is Class E basic helix-loop-helix protein 40 (BHLHE40), found in Homo sapiens (Human).